The primary structure comprises 289 residues: ATP synthase gamma chain (289 aa).

Belongs to the ATPase gamma chain family. In terms of assembly, F-type ATPases have 2 components, CF(1) - the catalytic core - and CF(0) - the membrane proton channel. CF(1) has five subunits: alpha(3), beta(3), gamma(1), delta(1), epsilon(1). CF(0) has three main subunits: a, b and c.

It is found in the cell membrane. In terms of biological role, produces ATP from ADP in the presence of a proton gradient across the membrane. The gamma chain is believed to be important in regulating ATPase activity and the flow of protons through the CF(0) complex. The polypeptide is ATP synthase gamma chain (Alkaliphilus metalliredigens (strain QYMF)).